A 601-amino-acid chain; its full sequence is Nuclear envelope protein ndc1 (601 aa).

Residues Met-1–Ala-34 are Cytoplasmic-facing. A helical transmembrane segment spans residues Cys-35–Ile-55. Residues Ser-56–Ser-58 lie on the Perinuclear space side of the membrane. Residues Phe-59–Val-79 form a helical membrane-spanning segment. Topologically, residues Met-80–Lys-106 are cytoplasmic. A helical transmembrane segment spans residues Ser-107 to Ile-127. The Perinuclear space segment spans residues Lys-128–Arg-153. A helical transmembrane segment spans residues Phe-154 to Tyr-174. At Leu-175 to Arg-182 the chain is on the cytoplasmic side. Residues Pro-183–Phe-203 form a helical membrane-spanning segment. At Ser-204–Leu-256 the chain is on the perinuclear space side. The helical transmembrane segment at Leu-257–Phe-277 threads the bilayer. Topologically, residues Arg-278 to Ser-601 are cytoplasmic.

Belongs to the NDC1 family. In terms of assembly, component of the nuclear pore complex (NPC). NPC constitutes the exclusive means of nucleocytoplasmic transport. NPCs allow the passive diffusion of ions and small molecules and the active, nuclear transport receptor-mediated bidirectional transport of macromolecules such as proteins, RNAs, ribonucleoparticles (RNPs), and ribosomal subunits across the nuclear envelope. Due to its 8-fold rotational symmetry, all subunits are present with 8 copies or multiples thereof.

The protein resides in the nucleus. The protein localises to the nuclear pore complex. Its subcellular location is the nucleus membrane. It is found in the cytoplasm. It localises to the cytoskeleton. The protein resides in the microtubule organizing center. The protein localises to the spindle pole body. Component of the nuclear pore complex (NPC) and the spindle pole body (SPB), which plays a key role in de novo assembly and insertion of both structures in the nuclear envelope. Involved in the formation of the bipolar mitotic spindle. Anchors the spindle pole body in the nuclear envelope. This chain is Nuclear envelope protein ndc1 (cut11), found in Schizosaccharomyces pombe (strain 972 / ATCC 24843) (Fission yeast).